Here is a 66-residue protein sequence, read N- to C-terminus: Large ribosomal subunit protein bL33c (66 aa).

This sequence belongs to the bacterial ribosomal protein bL33 family.

The protein localises to the plastid. Its subcellular location is the chloroplast. In Adiantum capillus-veneris (Maidenhair fern), this protein is Large ribosomal subunit protein bL33c.